Reading from the N-terminus, the 95-residue chain is Small ribosomal subunit protein bS6 (95 aa).

It belongs to the bacterial ribosomal protein bS6 family.

Functionally, binds together with bS18 to 16S ribosomal RNA. The polypeptide is Small ribosomal subunit protein bS6 (Clostridium perfringens (strain ATCC 13124 / DSM 756 / JCM 1290 / NCIMB 6125 / NCTC 8237 / Type A)).